We begin with the raw amino-acid sequence, 606 residues long: Scavenger receptor class A member 3 (606 aa).

Residues 1–56 are Cytoplasmic-facing; the sequence is MKVRSAGGDGDALCVTEEDLAGDDEDMPTFPCTQKGRPGPRCSRCQKNLSLHTSVR. A helical; Signal-anchor for type II membrane protein membrane pass occupies residues 57–77; it reads ILYLFLALLLVAVAVLASLVF. At 78–606 the chain is on the extracellular side; it reads RKVDSLSEDI…PGPPGSQSFY (529 aa). N115, N182, N224, N257, N313, N337, N365, N400, N430, and N451 each carry an N-linked (GlcNAc...) asparagine glycan. The tract at residues 454–606 is disordered; that stretch reads ILRGAPGPPG…PGPPGSQSFY (153 aa). Positions 455–513 constitute a Collagen-like 1 domain; that stretch reads LRGAPGPPGPRGFKGDMGVKGPVGGRGPKGDPGSLGPLGPQGPQGQPGEAGPVGERGPV. Low complexity predominate over residues 485–519; it reads DPGSLGPLGPQGPQGQPGEAGPVGERGPVGPRGFP. Gly residues predominate over residues 526 to 535; sequence GSFGTGGPRG. The Collagen-like 2 domain occupies 544-603; it reads GPPGPEGPPGSPGPSGPQGKPGIAGKTGSPGQRGAMGPKGEPGIQGPPGLPGPPGPPGSQ. Pro residues-rich tracts occupy residues 545 to 558 and 591 to 600; these read PPGPEGPPGSPGPS and PGLPGPPGPP.

In terms of tissue distribution, expressed ubiquitously.

The protein resides in the endoplasmic reticulum membrane. It is found in the golgi apparatus membrane. Seems to protect cells by scavenging oxidative molecules or harmful products of oxidation. The polypeptide is Scavenger receptor class A member 3 (SCARA3) (Homo sapiens (Human)).